We begin with the raw amino-acid sequence, 71 residues long: Translation initiation factor IF-1 (71 aa).

An S1-like domain is found at 1 to 71; the sequence is MSKDDLIQFT…LTKGRVIHRH (71 aa).

Belongs to the IF-1 family. As to quaternary structure, component of the 30S ribosomal translation pre-initiation complex which assembles on the 30S ribosome in the order IF-2 and IF-3, IF-1 and N-formylmethionyl-tRNA(fMet); mRNA recruitment can occur at any time during PIC assembly.

It is found in the cytoplasm. One of the essential components for the initiation of protein synthesis. Stabilizes the binding of IF-2 and IF-3 on the 30S subunit to which N-formylmethionyl-tRNA(fMet) subsequently binds. Helps modulate mRNA selection, yielding the 30S pre-initiation complex (PIC). Upon addition of the 50S ribosomal subunit IF-1, IF-2 and IF-3 are released leaving the mature 70S translation initiation complex. The polypeptide is Translation initiation factor IF-1 (Rickettsia prowazekii (strain Madrid E)).